Here is a 315-residue protein sequence, read N- to C-terminus: Probable cytosolic iron-sulfur protein assembly protein CIAO1 homolog (315 aa).

WD repeat units lie at residues 11-50 (GHED…WVCK), 56-95 (GHQR…FESC), 100-139 (GHEN…EFEC), 145-188 (CHSQ…CTLD), 189-229 (KHAS…RSWE), 236-275 (RHPR…CSWR), and 283-315 (AHSQ…WQID).

It belongs to the WD repeat CIA1 family.

Functionally, essential component of the cytosolic iron-sulfur (Fe/S) protein assembly machinery. Required for the maturation of extramitochondrial Fe/S proteins. The protein is Probable cytosolic iron-sulfur protein assembly protein CIAO1 homolog of Ixodes scapularis (Black-legged tick).